Reading from the N-terminus, the 196-residue chain is ECF RNA polymerase sigma factor SigK (196 aa).

Residues 39 to 105 (YDQTRARVYG…RAVDRVRSEQ (67 aa)) form a sigma-70 factor domain-2 region. Residues 62–65 (ETTQ) carry the Polymerase core binding motif. The interval 142-191 (CLDSLTDVQRECIQLAYYDGLTYAQVADRLAANLATIKSRMRDGIRALRK) is sigma-70 factor domain-4. A DNA-binding region (H-T-H motif) is located at residues 164 to 183 (YAQVADRLAANLATIKSRMR).

This sequence belongs to the sigma-70 factor family. ECF subfamily. In terms of assembly, interacts transiently with the RNA polymerase catalytic core formed by RpoA, RpoB, RpoC and RpoZ (2 alpha, 1 beta, 1 beta' and 1 omega subunit) to form the RNA polymerase holoenzyme that can initiate transcription. Interacts (via sigma-70 factor domain 4) with anti-sigma-K factor RskA.

Its function is as follows. Sigma factors are initiation factors that promote the attachment of RNA polymerase to specific initiation sites and are then released. Extracytoplasmic function (ECF) sigma factors are held in an inactive form by an anti-sigma factor until released by regulated intramembrane proteolysis. The sequence is that of ECF RNA polymerase sigma factor SigK (sigK) from Mycolicibacterium vanbaalenii (strain DSM 7251 / JCM 13017 / BCRC 16820 / KCTC 9966 / NRRL B-24157 / PYR-1) (Mycobacterium vanbaalenii).